The following is a 244-amino-acid chain: MFKMELGQLLGWDAYFYSIFAQAMNMEEFTVVALRALRELRFDFFAYGMCSVTPFMRPKTYMYGNYPEHWLQRYQAANYALIDPTVKHSKVSSAPILWSNELFRNCPDLWSEANDSSLCHGLAQPSFNTQGRVGVLSLARKDNAISLQEFEALKPVTKAFAAAALEKISALETDVRAFNTDVEFSERECDVLRWTADGKTSEEIGVIMGVCTDTVNYHHRNIQRKIGASNRVQAVSYAVALGYI.

Residues 177 to 242 (AFNTDVEFSE…QAVSYAVALG (66 aa)) enclose the HTH luxR-type domain. Residues 201-220 (SEEIGVIMGVCTDTVNYHHR) constitute a DNA-binding region (H-T-H motif).

Belongs to the autoinducer-regulated transcriptional regulatory protein family.

In terms of biological role, positive regulator of phenazine antibiotic production. May activate the phenazine biosynthetic genes by binding to a DNA sequence upstream of them, or to an intermediate gene which, in turn, interacts with them. This chain is Transcriptional activator protein PhzR (phzR), found in Pseudomonas fluorescens.